The following is an 827-amino-acid chain: Probable inorganic carbon transporter subunit DabA2 (827 aa).

Zn(2+)-binding residues include C351, D353, H524, and C539.

The protein belongs to the inorganic carbon transporter (TC 9.A.2) DabA family. As to quaternary structure, forms a complex with DabB2, possibly a heterodimer. It depends on Zn(2+) as a cofactor.

The protein resides in the cell inner membrane. With respect to regulation, uptake of inorganic carbon by cells in the presence of thiosulphate is fully inhibited by the uncouplers carbonyl cyanide m-chlorophenyl hydrazone (CCCP), carbonyl cyanide p-trifluoromethoxyphenyl hydrazone (FCCP), S13 or SF6847. Not inhibited by the ATPase inhibitor N,N-dicyclohexylcarbodiimide (DCCD). Inorganic carbon uptake is inhibited by the ionophore CCCP, suggesting uptake is coupled to a cation gradient. Part of an energy-coupled inorganic carbon pump; its substrate may be carbon dioxide. Expression of both dabA2 and dabB2 (DAB2) restores growth in ambient air to E.coli deleted of its carbonic anhydrase genes (called CAfree, deletion of 'can' and 'cynT'); neither dabA2 or dabB2 alone is sufficient. Rescue is pH-independent, suggesting it transports CO(2) and not carbonate ions. Together the genes allow greater than normal uptake of inorganic carbon by E.coli. Uptake of carbon dioxide rather than bicarbonate has been suggested based on kinetic calculations. This chain is Probable inorganic carbon transporter subunit DabA2, found in Halothiobacillus neapolitanus (strain ATCC 23641 / c2) (Thiobacillus neapolitanus).